Reading from the N-terminus, the 219-residue chain is Kynurenine formamidase (219 aa).

W28 is a binding site for substrate. Residues H58, H62, and D64 each contribute to the Zn(2+) site. H68 acts as the Proton donor/acceptor in catalysis. Zn(2+) is bound by residues H170 and E182.

The protein belongs to the Cyclase 1 superfamily. KynB family. As to quaternary structure, homodimer. It depends on Zn(2+) as a cofactor.

The enzyme catalyses N-formyl-L-kynurenine + H2O = L-kynurenine + formate + H(+). Its pathway is amino-acid degradation; L-tryptophan degradation via kynurenine pathway; L-kynurenine from L-tryptophan: step 2/2. Functionally, catalyzes the hydrolysis of N-formyl-L-kynurenine to L-kynurenine, the second step in the kynurenine pathway of tryptophan degradation. The protein is Kynurenine formamidase of Cupriavidus pinatubonensis (strain JMP 134 / LMG 1197) (Cupriavidus necator (strain JMP 134)).